The primary structure comprises 288 residues: Energy-coupling factor transporter ATP-binding protein EcfA2 (288 aa).

Positions 3-246 (ITFDHVSFTY…PAWLKANQLG (244 aa)) constitute an ABC transporter domain. Residue 40–47 (GHTGSGKS) coordinates ATP. Catalysis depends on Glu-171, which acts as the Proton acceptor.

The protein belongs to the ABC transporter superfamily. Energy-coupling factor EcfA family. Forms a stable energy-coupling factor (ECF) transporter complex probably composed of 2 membrane-embedded substrate-binding proteins (S component), 2 ATP-binding proteins (A component) and 2 transmembrane proteins (T component). This complex interacts with a number of substrate-specific components, including FolT and ThiT for 5-formyltetrahydrofolate and thiamine respectively.

Its subcellular location is the cell membrane. In terms of biological role, ATP-binding (A) component of a common energy-coupling factor (ECF) ABC-transporter complex. Unlike classic ABC transporters this ECF transporter provides the energy necessary to transport a number of different substrates including 5-formyltetrahydrofolate and thiamine. Expression of the complex plus FolT or ThiT in Lactococcus lactis subsp. cremoris (strain NZ9000) allows 5-formyltetrahydrofolate or thiamine uptake respectively; 5-formyltetrahydrofolate or thiamine are not taken up in the absence of FolT/ThiT or the EcfA1A2T complex. Deenergized L.lactis subsp. cremoris (treated with 2-deoxyglucose) do not take up substrate. The polypeptide is Energy-coupling factor transporter ATP-binding protein EcfA2 (Lacticaseibacillus paracasei (strain ATCC 334 / BCRC 17002 / CCUG 31169 / CIP 107868 / KCTC 3260 / NRRL B-441) (Lactobacillus paracasei)).